The chain runs to 444 residues: Signal recognition particle 54 kDa protein (444 aa).

Residues Gly-106–Thr-113, Asp-187–Arg-191, and Ser-245–Asp-248 contribute to the GTP site.

It belongs to the GTP-binding SRP family. SRP54 subfamily. In terms of assembly, part of the signal recognition particle protein translocation system, which is composed of SRP and FtsY. Archaeal SRP consists of a 7S RNA molecule of 300 nucleotides and two protein subunits: SRP54 and SRP19.

Its subcellular location is the cytoplasm. The catalysed reaction is GTP + H2O = GDP + phosphate + H(+). Its function is as follows. Involved in targeting and insertion of nascent membrane proteins into the cytoplasmic membrane. Binds to the hydrophobic signal sequence of the ribosome-nascent chain (RNC) as it emerges from the ribosomes. The SRP-RNC complex is then targeted to the cytoplasmic membrane where it interacts with the SRP receptor FtsY. The sequence is that of Signal recognition particle 54 kDa protein from Methanosphaera stadtmanae (strain ATCC 43021 / DSM 3091 / JCM 11832 / MCB-3).